Reading from the N-terminus, the 235-residue chain is Probable transcriptional regulatory protein CJJ81176_1187 (235 aa).

The protein belongs to the TACO1 family.

It localises to the cytoplasm. In Campylobacter jejuni subsp. jejuni serotype O:23/36 (strain 81-176), this protein is Probable transcriptional regulatory protein CJJ81176_1187.